The following is a 221-amino-acid chain: Ras-related protein Rab-27A (221 aa).

S2 carries the post-translational modification N-acetylserine. Residue S2 is modified to Phosphoserine. G16–S24 is a binding site for GTP. The Effector region motif lies at F38–F46. Residues D74–Q78, N133–D136, and S163–A165 each bind GTP. C123 and C188 are disulfide-bonded. Residues C219 and C221 are each lipidated (S-geranylgeranyl cysteine). Cysteine methyl ester is present on C221.

This sequence belongs to the small GTPase superfamily. Rab family. Binds SYTL1, SLAC2B, MYRIP, SYTL3, SYTL4 and SYTL5. Interacts with RPH3A and RPH3A. Binds MLPH and SYTL2. Interacts with UNC13D. Does not interact with the BLOC-3 complex (heterodimer of HPS1 and HPS4). Interacts (GDP-bound form preferentially) with DENND10. High levels in eye, intestine, lung, pancreas and spleen, and low or absent in brain, liver, heart, kidney, and skeletal muscle.

The protein localises to the membrane. It localises to the melanosome. Its subcellular location is the late endosome. It is found in the lysosome. The enzyme catalyses GTP + H2O = GDP + phosphate + H(+). Its activity is regulated as follows. Regulated by guanine nucleotide exchange factors (GEFs) which promote the exchange of bound GDP for free GTP, GTPase activating proteins (GAPs) which increase the GTP hydrolysis activity, and GDP dissociation inhibitors which inhibit the dissociation of the nucleotide from the GTPase. Activated by GEFs such as DENND10. Small GTPase which cycles between active GTP-bound and inactive GDP-bound states. In its active state, binds to a variety of effector proteins to regulate homeostasis of late endocytic pathway, including endosomal positioning, maturation and secretion. Plays a role in cytotoxic granule exocytosis in lymphocytes. Required for both granule maturation and granule docking and priming at the immunologic synapse. This chain is Ras-related protein Rab-27A (Rab27a), found in Rattus norvegicus (Rat).